We begin with the raw amino-acid sequence, 485 residues long: Glutamate--tRNA ligase (485 aa).

The 'HIGH' region motif lies at 11-21; it reads PSPTGHLHIGN. The 'KMSKS' region signature appears at 252–256; that stretch reads KLSKR. Lys-255 serves as a coordination point for ATP.

Belongs to the class-I aminoacyl-tRNA synthetase family. Glutamate--tRNA ligase type 1 subfamily. As to quaternary structure, monomer.

The protein localises to the cytoplasm. The catalysed reaction is tRNA(Glu) + L-glutamate + ATP = L-glutamyl-tRNA(Glu) + AMP + diphosphate. In terms of biological role, catalyzes the attachment of glutamate to tRNA(Glu) in a two-step reaction: glutamate is first activated by ATP to form Glu-AMP and then transferred to the acceptor end of tRNA(Glu). The protein is Glutamate--tRNA ligase of Bacillus cytotoxicus (strain DSM 22905 / CIP 110041 / 391-98 / NVH 391-98).